The chain runs to 369 residues: 4-hydroxy-3-methylbut-2-en-1-yl diphosphate synthase (flavodoxin) (369 aa).

Cys270, Cys273, Cys305, and Glu312 together coordinate [4Fe-4S] cluster.

It belongs to the IspG family. The cofactor is [4Fe-4S] cluster.

The catalysed reaction is (2E)-4-hydroxy-3-methylbut-2-enyl diphosphate + oxidized [flavodoxin] + H2O + 2 H(+) = 2-C-methyl-D-erythritol 2,4-cyclic diphosphate + reduced [flavodoxin]. It functions in the pathway isoprenoid biosynthesis; isopentenyl diphosphate biosynthesis via DXP pathway; isopentenyl diphosphate from 1-deoxy-D-xylulose 5-phosphate: step 5/6. Its function is as follows. Converts 2C-methyl-D-erythritol 2,4-cyclodiphosphate (ME-2,4cPP) into 1-hydroxy-2-methyl-2-(E)-butenyl 4-diphosphate. The protein is 4-hydroxy-3-methylbut-2-en-1-yl diphosphate synthase (flavodoxin) of Psychromonas ingrahamii (strain DSM 17664 / CCUG 51855 / 37).